The following is a 414-amino-acid chain: 3-phosphoshikimate 1-carboxyvinyltransferase (414 aa).

K20, S21, and R25 together coordinate 3-phosphoshikimate. K20 contributes to the phosphoenolpyruvate binding site. Residues G85 and R113 each contribute to the phosphoenolpyruvate site. S154, S155, Q156, S181, D296, and K323 together coordinate 3-phosphoshikimate. Residue Q156 coordinates phosphoenolpyruvate. The active-site Proton acceptor is D296. Residues R327, R371, and K395 each contribute to the phosphoenolpyruvate site.

It belongs to the EPSP synthase family. As to quaternary structure, monomer.

It is found in the cytoplasm. The catalysed reaction is 3-phosphoshikimate + phosphoenolpyruvate = 5-O-(1-carboxyvinyl)-3-phosphoshikimate + phosphate. It participates in metabolic intermediate biosynthesis; chorismate biosynthesis. In terms of biological role, catalyzes the transfer of the enolpyruvyl moiety of phosphoenolpyruvate (PEP) to the 5-hydroxyl of shikimate-3-phosphate (S3P) to produce enolpyruvyl shikimate-3-phosphate and inorganic phosphate. The protein is 3-phosphoshikimate 1-carboxyvinyltransferase of Saccharolobus islandicus (strain M.14.25 / Kamchatka #1) (Sulfolobus islandicus).